Consider the following 275-residue polypeptide: Large ribosomal subunit protein uL2c (275 aa).

The interval 225 to 259 (KNPVDHPHGGGEGRAPIGRSTPVTPWGKPALGRRT) is disordered.

Belongs to the universal ribosomal protein uL2 family. As to quaternary structure, part of the 50S ribosomal subunit.

It localises to the plastid. The protein resides in the cyanelle. This is Large ribosomal subunit protein uL2c (rpl2) from Cyanophora paradoxa.